We begin with the raw amino-acid sequence, 220 residues long: Ribosomal RNA large subunit methyltransferase E (220 aa).

Residues glycine 60, tryptophan 62, aspartate 92, aspartate 108, and aspartate 133 each contribute to the S-adenosyl-L-methionine site. Catalysis depends on lysine 173, which acts as the Proton acceptor.

It belongs to the class I-like SAM-binding methyltransferase superfamily. RNA methyltransferase RlmE family.

The protein localises to the cytoplasm. The enzyme catalyses uridine(2552) in 23S rRNA + S-adenosyl-L-methionine = 2'-O-methyluridine(2552) in 23S rRNA + S-adenosyl-L-homocysteine + H(+). Functionally, specifically methylates the uridine in position 2552 of 23S rRNA at the 2'-O position of the ribose in the fully assembled 50S ribosomal subunit. The polypeptide is Ribosomal RNA large subunit methyltransferase E (Paraburkholderia phytofirmans (strain DSM 17436 / LMG 22146 / PsJN) (Burkholderia phytofirmans)).